Here is a 278-residue protein sequence, read N- to C-terminus: 2-heptyl-3-hydroxy-4-quinolone dioxygenase AqdC1 (278 aa).

The AB hydrolase-1 domain occupies proline 29–phenylalanine 158. Histidine 103 contributes to the substrate binding site. Histidine 250 functions as the Proton donor/acceptor in the catalytic mechanism.

This sequence belongs to the AB hydrolase superfamily.

It carries out the reaction 2-heptyl-3-hydroxy-4(1H)-quinolone + O2 = N-octanoylanthranilate + CO + H(+). Involved in the degradation of the Pseudomonas aeruginosa quorum sensing signal molecules HHQ (2-heptyl-4-quinolone) and PQS (2-heptyl-3-hydroxy-4-quinolone) to anthranilic acid. Catalyzes the cleavage of PQS to form N-octanoylanthranilic acid and carbon monoxide. The chain is 2-heptyl-3-hydroxy-4-quinolone dioxygenase AqdC1 from Rhodococcus erythropolis (Arthrobacter picolinophilus).